A 151-amino-acid polypeptide reads, in one-letter code: Acidic phospholipase A2 3 (151 aa).

Residues 1 to 27 form the signal peptide; it reads MYPAHLLVLLAVCVSLLGAASIPARPL. 7 disulfides stabilise this stretch: C38–C104, C54–C151, C56–C72, C71–C132, C78–C125, C88–C118, and C111–C123. Ca(2+) is bound by residues Y55, G57, and G59. Residue H75 is part of the active site. Ca(2+) is bound at residue D76. D126 is an active-site residue.

Belongs to the phospholipase A2 family. Group I subfamily. D49 sub-subfamily. Ca(2+) is required as a cofactor. In terms of tissue distribution, expressed by the venom gland.

It localises to the secreted. It carries out the reaction a 1,2-diacyl-sn-glycero-3-phosphocholine + H2O = a 1-acyl-sn-glycero-3-phosphocholine + a fatty acid + H(+). Functionally, PLA2 catalyzes the calcium-dependent hydrolysis of the 2-acyl groups in 3-sn-phosphoglycerides. The protein is Acidic phospholipase A2 3 of Tropidechis carinatus (Australian rough-scaled snake).